Here is a 505-residue protein sequence, read N- to C-terminus: Deoxyguanosinetriphosphate triphosphohydrolase (505 aa).

In terms of domain architecture, HD spans 66-273 (RLTHSMEVQQ…MEAADDISYC (208 aa)).

The protein belongs to the dGTPase family. Type 1 subfamily. As to quaternary structure, homotetramer. Mg(2+) serves as cofactor.

It carries out the reaction dGTP + H2O = 2'-deoxyguanosine + triphosphate + H(+). In terms of biological role, dGTPase preferentially hydrolyzes dGTP over the other canonical NTPs. The protein is Deoxyguanosinetriphosphate triphosphohydrolase of Salmonella typhimurium (strain LT2 / SGSC1412 / ATCC 700720).